Here is a 132-residue protein sequence, read N- to C-terminus: DNA-directed RNA polymerase subunit omega (132 aa).

Residues 89 to 109 (HSSESESIFNTSSQEEGTSFD) are disordered. Residues 96-105 (IFNTSSQEEG) show a composition bias toward polar residues.

The protein belongs to the RNA polymerase subunit omega family. As to quaternary structure, the RNAP catalytic core consists of 2 alpha, 1 beta, 1 beta' and 1 omega subunit. When a sigma factor is associated with the core the holoenzyme is formed, which can initiate transcription.

It catalyses the reaction RNA(n) + a ribonucleoside 5'-triphosphate = RNA(n+1) + diphosphate. Promotes RNA polymerase assembly. Latches the N- and C-terminal regions of the beta' subunit thereby facilitating its interaction with the beta and alpha subunits. The polypeptide is DNA-directed RNA polymerase subunit omega (Bartonella tribocorum (strain CIP 105476 / IBS 506)).